The following is a 265-amino-acid chain: Type III pantothenate kinase (265 aa).

An ATP-binding site is contributed by 6-13; the sequence is DVGNTNIV. Substrate contacts are provided by residues tyrosine 100 and 107–110; that span reads GADR. The active-site Proton acceptor is aspartate 109. Aspartate 129 contributes to the K(+) binding site. Threonine 132 provides a ligand contact to ATP. Threonine 184 provides a ligand contact to substrate.

It belongs to the type III pantothenate kinase family. As to quaternary structure, homodimer. NH4(+) serves as cofactor. Requires K(+) as cofactor.

Its subcellular location is the cytoplasm. It catalyses the reaction (R)-pantothenate + ATP = (R)-4'-phosphopantothenate + ADP + H(+). Its pathway is cofactor biosynthesis; coenzyme A biosynthesis; CoA from (R)-pantothenate: step 1/5. In terms of biological role, catalyzes the phosphorylation of pantothenate (Pan), the first step in CoA biosynthesis. This Alkaliphilus oremlandii (strain OhILAs) (Clostridium oremlandii (strain OhILAs)) protein is Type III pantothenate kinase.